A 424-amino-acid polypeptide reads, in one-letter code: MLDPKRVRTQTEEIARRLAIKNFEFDIATFEQLEERRRAIQVRTENLQSEQNKRSKSIGKAKAAGEDIKPLLEEVESLKQQRGDAEDELRSVQESLNAFFAGIPNLPDDDVPPGASEDDNVETRVWGTPREFDFEPKDHVALGEQLKGLDFEKATQLAHSRFAVMRGQLARLHRALAQFMLDQHTLQHGYTEAYVPYLVNANTLFGTGQLPKFEEDLFRTAGDNPLYLIPTAEVPATNLVADTILDDAELPLRLVCHTPCFRSEAGSYGRDVRGMIRQHQFDKVELVHIVRPDESTQALEELTGHAEKILQLLELPYRVVTLCGGDMGFSAAKTYDLEVWLPGQGKYREISSCSNTRDFQARRMQARWRNPDTGKPEPVHTLNGSGLAVGRAMIAVMENYQQADGSILVPEVLKPYMGGVERIQ.

231 to 233 serves as a coordination point for L-serine; it reads TAE. 262–264 lines the ATP pocket; it reads RSE. Glu285 is an L-serine binding site. ATP is bound at residue 349–352; it reads EISS. Residue Ser385 coordinates L-serine.

The protein belongs to the class-II aminoacyl-tRNA synthetase family. Type-1 seryl-tRNA synthetase subfamily. In terms of assembly, homodimer. The tRNA molecule binds across the dimer.

It localises to the cytoplasm. The catalysed reaction is tRNA(Ser) + L-serine + ATP = L-seryl-tRNA(Ser) + AMP + diphosphate + H(+). It carries out the reaction tRNA(Sec) + L-serine + ATP = L-seryl-tRNA(Sec) + AMP + diphosphate + H(+). It functions in the pathway aminoacyl-tRNA biosynthesis; selenocysteinyl-tRNA(Sec) biosynthesis; L-seryl-tRNA(Sec) from L-serine and tRNA(Sec): step 1/1. Its function is as follows. Catalyzes the attachment of serine to tRNA(Ser). Is also able to aminoacylate tRNA(Sec) with serine, to form the misacylated tRNA L-seryl-tRNA(Sec), which will be further converted into selenocysteinyl-tRNA(Sec). The protein is Serine--tRNA ligase of Marinobacter nauticus (strain ATCC 700491 / DSM 11845 / VT8) (Marinobacter aquaeolei).